We begin with the raw amino-acid sequence, 331 residues long: MSIAAKDIEPADIPGNLQGGEYSPYHVFSAEEWSRFRADTPLTLTADEVQRLRSLNDPVDLDEVRRIYLSLSRLLSAHVEASQILFRQRTRFLSMSNETKTPFVIGVAGSVAVGKSTTARILAELLARWPSSPKVDLVTTDGFLYPNAVLQRENLMDRKGFPASYDIGALLRFLSAIKAGRPNVKAPTYSHLTYDVIPDQFQVIDRPDILIFEGINVLQSRDLPADGKIVPMVSDFFDFSIYIDAEESLIHSWYVNRFMRLRETAFQSPQSFFHRYATISEDAARAIAEGLWHNINLKNLHQNILPTRPRADLILQKGPNHLTQTVALRKL.

109–116 (GSVAVGKS) is a binding site for ATP.

Belongs to the prokaryotic pantothenate kinase family.

The protein resides in the cytoplasm. The catalysed reaction is (R)-pantothenate + ATP = (R)-4'-phosphopantothenate + ADP + H(+). It participates in cofactor biosynthesis; coenzyme A biosynthesis; CoA from (R)-pantothenate: step 1/5. This Rhizobium meliloti (strain 1021) (Ensifer meliloti) protein is Pantothenate kinase.